The sequence spans 211 residues: Urease accessory protein UreG (211 aa).

11–18 (GPVGAGKT) is a binding site for GTP.

The protein belongs to the SIMIBI class G3E GTPase family. UreG subfamily. Homodimer. UreD, UreF and UreG form a complex that acts as a GTP-hydrolysis-dependent molecular chaperone, activating the urease apoprotein by helping to assemble the nickel containing metallocenter of UreC. The UreE protein probably delivers the nickel.

Its subcellular location is the cytoplasm. In terms of biological role, facilitates the functional incorporation of the urease nickel metallocenter. This process requires GTP hydrolysis, probably effectuated by UreG. This chain is Urease accessory protein UreG, found in Actinobacillus pleuropneumoniae serotype 5b (strain L20).